Consider the following 113-residue polypeptide: Pancreatic progenitor cell differentiation and proliferation factor B (113 aa).

The protein belongs to the PPDPF family.

Functionally, probable regulator of exocrine pancreas development. The polypeptide is Pancreatic progenitor cell differentiation and proliferation factor B (ppdpf-b) (Xenopus laevis (African clawed frog)).